A 332-amino-acid chain; its full sequence is Holliday junction branch migration complex subunit RuvB (332 aa).

Residues 1–181 form a large ATPase domain (RuvB-L) region; it reads MARILDNDVM…FGITGHMEYY (181 aa). ATP is bound by residues Leu-20, Arg-21, Gly-62, Lys-65, Thr-66, Thr-67, 128–130, Arg-171, Tyr-181, and Arg-218; that span reads EDF. Thr-66 is a binding site for Mg(2+). The segment at 182-252 is small ATPAse domain (RuvB-S); it reads QEKDLTEIVE…ITDRALTMLD (71 aa). Residues 255–332 form a head domain (RuvB-H) region; that stretch reads REGLDYIDQK…RHLGYPYQNT (78 aa). DNA contacts are provided by Arg-291, Arg-310, Arg-312, and Arg-315.

Belongs to the RuvB family. As to quaternary structure, homohexamer. Forms an RuvA(8)-RuvB(12)-Holliday junction (HJ) complex. HJ DNA is sandwiched between 2 RuvA tetramers; dsDNA enters through RuvA and exits via RuvB. An RuvB hexamer assembles on each DNA strand where it exits the tetramer. Each RuvB hexamer is contacted by two RuvA subunits (via domain III) on 2 adjacent RuvB subunits; this complex drives branch migration. In the full resolvosome a probable DNA-RuvA(4)-RuvB(12)-RuvC(2) complex forms which resolves the HJ.

It localises to the cytoplasm. It catalyses the reaction ATP + H2O = ADP + phosphate + H(+). In terms of biological role, the RuvA-RuvB-RuvC complex processes Holliday junction (HJ) DNA during genetic recombination and DNA repair, while the RuvA-RuvB complex plays an important role in the rescue of blocked DNA replication forks via replication fork reversal (RFR). RuvA specifically binds to HJ cruciform DNA, conferring on it an open structure. The RuvB hexamer acts as an ATP-dependent pump, pulling dsDNA into and through the RuvAB complex. RuvB forms 2 homohexamers on either side of HJ DNA bound by 1 or 2 RuvA tetramers; 4 subunits per hexamer contact DNA at a time. Coordinated motions by a converter formed by DNA-disengaged RuvB subunits stimulates ATP hydrolysis and nucleotide exchange. Immobilization of the converter enables RuvB to convert the ATP-contained energy into a lever motion, pulling 2 nucleotides of DNA out of the RuvA tetramer per ATP hydrolyzed, thus driving DNA branch migration. The RuvB motors rotate together with the DNA substrate, which together with the progressing nucleotide cycle form the mechanistic basis for DNA recombination by continuous HJ branch migration. Branch migration allows RuvC to scan DNA until it finds its consensus sequence, where it cleaves and resolves cruciform DNA. In Streptococcus pyogenes serotype M3 (strain ATCC BAA-595 / MGAS315), this protein is Holliday junction branch migration complex subunit RuvB.